Here is a 308-residue protein sequence, read N- to C-terminus: NAD kinase (308 aa).

The Proton acceptor role is filled by D86. NAD(+)-binding positions include 86–87 (DG), R91, 160–161 (NE), D190, and 201–206 (TAYAFS).

It belongs to the NAD kinase family. The cofactor is a divalent metal cation.

The protein localises to the cytoplasm. It carries out the reaction NAD(+) + ATP = ADP + NADP(+) + H(+). In terms of biological role, involved in the regulation of the intracellular balance of NAD and NADP, and is a key enzyme in the biosynthesis of NADP. Catalyzes specifically the phosphorylation on 2'-hydroxyl of the adenosine moiety of NAD to yield NADP. The sequence is that of NAD kinase from Mycolicibacterium paratuberculosis (strain ATCC BAA-968 / K-10) (Mycobacterium paratuberculosis).